The sequence spans 226 residues: UPF0758 protein LL1007 (226 aa).

The region spanning 103-225 is the MPN domain; sequence QVLSSREYGL…YFSFREEEIR (123 aa). The Zn(2+) site is built by histidine 174, histidine 176, and aspartate 187. The JAMM motif motif lies at 174–187; sequence HNHPSGNLKPSQAD.

This sequence belongs to the UPF0758 family.

This is UPF0758 protein LL1007 from Lactococcus lactis subsp. lactis (strain IL1403) (Streptococcus lactis).